We begin with the raw amino-acid sequence, 122 residues long: Large ribosomal subunit protein uL14c (122 aa).

The protein belongs to the universal ribosomal protein uL14 family. Part of the 50S ribosomal subunit.

The protein resides in the plastid. The protein localises to the chloroplast. Its function is as follows. Binds to 23S rRNA. This chain is Large ribosomal subunit protein uL14c, found in Illicium oligandrum (Star anise).